A 1105-amino-acid polypeptide reads, in one-letter code: Mediator of RNA polymerase II transcription subunit 14 (1105 aa).

Positions 28-48 (ASQQANGGIYRNGIGKKSHSP) are disordered.

It belongs to the Mediator complex subunit 14 family. In terms of assembly, component of the Mediator complex.

The protein resides in the nucleus. Its function is as follows. Component of the Mediator complex, a coactivator involved in the regulated transcription of nearly all RNA polymerase II-dependent genes. Mediator functions as a bridge to convey information from gene-specific regulatory proteins to the basal RNA polymerase II transcription machinery. Mediator is recruited to promoters by direct interactions with regulatory proteins and serves as a scaffold for the assembly of a functional preinitiation complex with RNA polymerase II and the general transcription factors. The sequence is that of Mediator of RNA polymerase II transcription subunit 14 (RGR1) from Coccidioides immitis (strain RS) (Valley fever fungus).